The sequence spans 132 residues: Small ribosomal subunit protein uS8 (132 aa).

Belongs to the universal ribosomal protein uS8 family. In terms of assembly, part of the 30S ribosomal subunit. Contacts proteins S5 and S12.

In terms of biological role, one of the primary rRNA binding proteins, it binds directly to 16S rRNA central domain where it helps coordinate assembly of the platform of the 30S subunit. This Heliobacterium modesticaldum (strain ATCC 51547 / Ice1) protein is Small ribosomal subunit protein uS8.